Reading from the N-terminus, the 230-residue chain is Thymidylate kinase (230 aa).

Residue 20–27 (GGEGAGKS) coordinates ATP.

Belongs to the thymidylate kinase family.

The catalysed reaction is dTMP + ATP = dTDP + ADP. Phosphorylation of dTMP to form dTDP in both de novo and salvage pathways of dTTP synthesis. This chain is Thymidylate kinase, found in Rhodopseudomonas palustris (strain ATCC BAA-98 / CGA009).